The following is a 219-amino-acid chain: Ras-related protein Rab-3D (219 aa).

At A2 the chain carries N-acetylalanine. 29–37 (GNSSVGKTS) serves as a coordination point for GDP. Positions 31, 32, 33, 34, 35, 36, 37, 49, and 53 each coordinate GTP. T36 provides a ligand contact to Mg(2+). The Switch 1 signature appears at 49 to 58 (PAFVSTVGID). Residues T54 and D77 each coordinate Mg(2+). Position 80 (G80) interacts with GTP. Residues 80-96 (GQERYRTITTAYYRGAM) carry the Switch 2 motif. T86 bears the Phosphothreonine; by LRRK2 mark. GTP-binding residues include N135, K136, D138, A166, and K167. Residues 135 to 138 (NKCD) and 165 to 167 (SAK) contribute to the GDP site. S190 bears the Phosphoserine mark. The disordered stretch occupies residues 190 to 219 (SLEPSSSPGSNGKGPALGDTPPPQPSSCSC). Residues 193–203 (PSSSPGSNGKG) show a composition bias toward low complexity. A compositionally biased stretch (pro residues) spans 209–219 (TPPPQPSSCSC). 2 S-geranylgeranyl cysteine lipidation sites follow: C217 and C219. C219 carries the post-translational modification Cysteine methyl ester.

Belongs to the small GTPase superfamily. Rab family. As to quaternary structure, interacts with RIMS1, RIMS2, RPH3A, RPH3AL and RAB3IP. The GTP-bound form interacts with REP15. Interacts with CHM and CHML; phosphorylation at Thr-86 disrupts these interactions. Interacts with MADD (via uDENN domain); the GTP-bound form is preferred for interaction. It depends on Mg(2+) as a cofactor. Phosphorylation of Thr-86 in the switch II region by LRRK2 prevents the association of RAB regulatory proteins, including CHM and CHML. Predominantly expressed in the adipocyte tissue, but is also expressed in several other organs including skin, spleen, heart and lung.

It localises to the cell membrane. The catalysed reaction is GTP + H2O = GDP + phosphate + H(+). Regulated by guanine nucleotide exchange factors (GEFs) which promote the exchange of bound GDP for free GTP. Regulated by GTPase activating proteins (GAPs) which increase the GTP hydrolysis activity. Inhibited by GDP dissociation inhibitors (GDIs) which prevent Rab-GDP dissociation. In terms of biological role, the small GTPases Rab are key regulators of intracellular membrane trafficking, from the formation of transport vesicles to their fusion with membranes. Rabs cycle between an inactive GDP-bound form and an active GTP-bound form that is able to recruit to membranes different sets of downstream effectors directly responsible for vesicle formation, movement, tethering and fusion. RAB3D may be involved in the insulin-induced exocytosis of GLUT4-containing vesicles in adipocytes. The sequence is that of Ras-related protein Rab-3D from Mus musculus (Mouse).